An 877-amino-acid polypeptide reads, in one-letter code: Alanine--tRNA ligase (877 aa).

His562, His566, Cys664, and His668 together coordinate Zn(2+).

It belongs to the class-II aminoacyl-tRNA synthetase family. Requires Zn(2+) as cofactor.

It is found in the cytoplasm. It carries out the reaction tRNA(Ala) + L-alanine + ATP = L-alanyl-tRNA(Ala) + AMP + diphosphate. In terms of biological role, catalyzes the attachment of alanine to tRNA(Ala) in a two-step reaction: alanine is first activated by ATP to form Ala-AMP and then transferred to the acceptor end of tRNA(Ala). Also edits incorrectly charged Ser-tRNA(Ala) and Gly-tRNA(Ala) via its editing domain. The polypeptide is Alanine--tRNA ligase (Picosynechococcus sp. (strain ATCC 27264 / PCC 7002 / PR-6) (Agmenellum quadruplicatum)).